The primary structure comprises 545 residues: Squalene monooxygenase SE2 (545 aa).

A helical membrane pass occupies residues 12–32; that stretch reads EYFLMFAATLLFGFVLYLFTL. FAD is bound by residues 86–87, 106–107, Arg-114, Arg-185, Val-201, Asp-364, and Met-377; these read VA and ER. A run of 2 helical transmembrane segments spans residues 475-495 and 500-520; these read LFFHFFAVAIYGVGRLLIPFP and MWLGARLISGASGIIFPIIKS.

Belongs to the squalene monooxygenase family. The cofactor is FAD. As to expression, weak expression in petioles and flower buds and barely detectable in roots and leaves. In petioles, preferentially observed in vascular bundle tissue (phloem cells and parenchymatous cells near xylem) and resin ducts.

The protein localises to the membrane. The catalysed reaction is squalene + reduced [NADPH--hemoprotein reductase] + O2 = (S)-2,3-epoxysqualene + oxidized [NADPH--hemoprotein reductase] + H2O + H(+). It participates in terpene metabolism; lanosterol biosynthesis; lanosterol from farnesyl diphosphate: step 2/3. Component of the triterpene saponins (e.g. ginsenosides or panaxosides) and phytosterols biosynthetic pathways. Catalyzes the first oxygenation step in sterol biosynthesis and is suggested to be one of the rate-limiting enzymes in this pathway. The protein is Squalene monooxygenase SE2 of Panax ginseng (Korean ginseng).